A 1057-amino-acid chain; its full sequence is Carbamoyl phosphate synthase large chain (1057 aa).

Residues 1–401 form a carboxyphosphate synthetic domain region; the sequence is MPKRNDIKTI…SLLKAIRSLE (401 aa). Positions 129, 169, 175, 176, 208, 210, 215, 241, 242, 243, 284, and 298 each coordinate ATP. Positions 133–327 constitute an ATP-grasp 1 domain; that stretch reads RTLMNDLNVP…IAKLAAKIAV (195 aa). Mg(2+) contacts are provided by Gln284, Glu298, and Asn300. Mn(2+) is bound by residues Gln284, Glu298, and Asn300. The tract at residues 402 to 546 is oligomerization domain; that stretch reads YGVHHLGLPN…YGTYETENES (145 aa). Residues 547–929 form a carbamoyl phosphate synthetic domain region; it reads IVTDKEKILV…ALFKGLTGSG (383 aa). An ATP-grasp 2 domain is found at 671–861; sequence EALLRKINVP…MAQLAMRAII (191 aa). 10 residues coordinate ATP: Arg707, Arg746, Leu748, Glu752, Gly777, Val778, His779, Ser780, Gln820, and Glu832. The Mg(2+) site is built by Gln820, Glu832, and Asn834. The Mn(2+) site is built by Gln820, Glu832, and Asn834. The MGS-like domain maps to 930 to 1057; the sequence is VEVKDHGTVL…ESMTFTMRQM (128 aa). Residues 930–1057 form an allosteric domain region; it reads VEVKDHGTVL…ESMTFTMRQM (128 aa).

The protein belongs to the CarB family. As to quaternary structure, composed of two chains; the small (or glutamine) chain promotes the hydrolysis of glutamine to ammonia, which is used by the large (or ammonia) chain to synthesize carbamoyl phosphate. Tetramer of heterodimers (alpha,beta)4. It depends on Mg(2+) as a cofactor. Mn(2+) serves as cofactor.

The enzyme catalyses hydrogencarbonate + L-glutamine + 2 ATP + H2O = carbamoyl phosphate + L-glutamate + 2 ADP + phosphate + 2 H(+). It catalyses the reaction hydrogencarbonate + NH4(+) + 2 ATP = carbamoyl phosphate + 2 ADP + phosphate + 2 H(+). It functions in the pathway amino-acid biosynthesis; L-arginine biosynthesis; carbamoyl phosphate from bicarbonate: step 1/1. Its pathway is pyrimidine metabolism; UMP biosynthesis via de novo pathway; (S)-dihydroorotate from bicarbonate: step 1/3. Its function is as follows. Large subunit of the glutamine-dependent carbamoyl phosphate synthetase (CPSase). CPSase catalyzes the formation of carbamoyl phosphate from the ammonia moiety of glutamine, carbonate, and phosphate donated by ATP, constituting the first step of 2 biosynthetic pathways, one leading to arginine and/or urea and the other to pyrimidine nucleotides. The large subunit (synthetase) binds the substrates ammonia (free or transferred from glutamine from the small subunit), hydrogencarbonate and ATP and carries out an ATP-coupled ligase reaction, activating hydrogencarbonate by forming carboxy phosphate which reacts with ammonia to form carbamoyl phosphate. This chain is Carbamoyl phosphate synthase large chain, found in Staphylococcus aureus (strain MW2).